The chain runs to 892 residues: Isoleucine--tRNA ligase (892 aa).

The 'HIGH' region signature appears at 60 to 70 (PYANGSIHIGH). Position 552 (Glu552) interacts with L-isoleucyl-5'-AMP. The 'KMSKS' region motif lies at 593–597 (KMSKS). Position 596 (Lys596) interacts with ATP. Residues Cys862, Cys865, Cys879, and Cys882 each coordinate Zn(2+).

The protein belongs to the class-I aminoacyl-tRNA synthetase family. IleS type 1 subfamily. In terms of assembly, monomer. Zn(2+) serves as cofactor.

The protein resides in the cytoplasm. It carries out the reaction tRNA(Ile) + L-isoleucine + ATP = L-isoleucyl-tRNA(Ile) + AMP + diphosphate. Functionally, catalyzes the attachment of isoleucine to tRNA(Ile). As IleRS can inadvertently accommodate and process structurally similar amino acids such as valine, to avoid such errors it has two additional distinct tRNA(Ile)-dependent editing activities. One activity is designated as 'pretransfer' editing and involves the hydrolysis of activated Val-AMP. The other activity is designated 'posttransfer' editing and involves deacylation of mischarged Val-tRNA(Ile). The polypeptide is Isoleucine--tRNA ligase (Mycoplasmopsis agalactiae (strain NCTC 10123 / CIP 59.7 / PG2) (Mycoplasma agalactiae)).